The primary structure comprises 443 residues: Type I restriction enzyme HindI methylase subunit (443 aa).

S-adenosyl-L-methionine contacts are provided by residues 117–122 (QYFTPK), 146–148 (SGG), and glutamate 173.

The protein belongs to the N(4)/N(6)-methyltransferase family. In terms of assembly, the type I restriction/modification system is composed of three polypeptides R, M and S; the restriction enzyme has stoichiometry R(2)M(2)S(1) while the methyltransferase is M(2)S(1).

The enzyme catalyses a 2'-deoxyadenosine in DNA + S-adenosyl-L-methionine = an N(6)-methyl-2'-deoxyadenosine in DNA + S-adenosyl-L-homocysteine + H(+). Functionally, the subtype gamma methyltransferase (M) subunit of a type I restriction enzyme. The M and S subunits together form a methyltransferase (MTase) that methylates adenosines in the sequence 5'-RAACN(5)TAG-3'. Methylation protects against cleavage by HindI. In the presence of the R subunit the complex can also act as an endonuclease, binding to the same target sequence but cutting the DNA some distance from this site. Whether the DNA is cut or modified depends on the methylation state of the target sequence. When the target site is unmodified, the DNA is cut. When the target site is hemimethylated, the complex acts as a maintenance MTase modifying the DNA so that both strands become methylated. After locating a non-methylated recognition site, the enzyme complex serves as a molecular motor that translocates DNA in an ATP-dependent manner until a collision occurs that triggers cleavage. The protein is Type I restriction enzyme HindI methylase subunit of Haemophilus influenzae (strain ATCC 51907 / DSM 11121 / KW20 / Rd).